A 311-amino-acid chain; its full sequence is MPKTLIFGHKNPDTDTICSAIAYADLKGQLGVETEAVRLGEPNGETLYALEAFGVSTPRLIEKAANETDRVILVDHNERQQSVSDIDDVQVVEVIDHHRIANFETADPVYYRAEPVGCTATIIKKLYKEHGLDIPKPIAGLMLSAIISDSLLFKSPTCTEEDRQAAKELAEIAGVNAEEYGLNMLKAGADISDKTAGELLTMDAKAFAMGAATVEIAQVNTVDINDVLARQSELEKVITAKINDNGLDLFVFIITDILENDSVALVLGDKTAAFEQAFQTTLTNHTAVLKGVVSRKKQVVPPLTEAIANVN.

The Mn(2+) site is built by H9, D13, D15, D75, H97, and D149.

Belongs to the PPase class C family. The cofactor is Mn(2+).

It is found in the cytoplasm. It carries out the reaction diphosphate + H2O = 2 phosphate + H(+). The polypeptide is Probable manganese-dependent inorganic pyrophosphatase (Shouchella clausii (strain KSM-K16) (Alkalihalobacillus clausii)).